The sequence spans 326 residues: Polycomb complex protein BMI-1 (326 aa).

An RING-type zinc finger spans residues 18 to 57 (CVLCGGYFIDATTIIECLHSFCKTCIVRYLETSKYCPICD). The short motif at 81–95 (KLVPGLFKNEMKRRR) is the Nuclear localization signal element. Positions 162-182 (RYLRCPAAMTVMHLRKFLRSK) are interaction with PHC2. The interval 164–228 (LRCPAAMTVM…GPLPLKYRVR (65 aa)) is interaction with E4F1. The tract at residues 236–326 (ISHQRDGLTN…VNGSSATSSG (91 aa)) is disordered. Residues 266-278 (PSTSSCLPSPSTP) are compositionally biased toward low complexity. Positions 279–309 (VQSPHPQFPHISSTMNGTSNSPSGNHQSSFA) are enriched in polar residues. The span at 315 to 326 (SSVNGSSATSSG) shows a compositional bias: low complexity.

Component of a PRC1-like complex. Identified in a PRC1-like HPRC-H complex with CBX2, CBX4, CBX8, PHC1, PHC2, PHC3 RING1 and RNF2. Interacts with RNF2/RING2. Interacts with RING1. Part of a complex that contains RNF2, UB2D3 and BMI1, where RNF2 and BMI1 form a tight heterodimer, and UB2D3 interacts only with RNF2. The complex composed of RNF2, UB2D3 and BMI1 binds nucleosomes, and has activity only with nucleosomal histone H2A. Interacts with CBX7 and CBX8. Interacts with SPOP. Part of a complex consisting of BMI1, CUL3 and SPOP. Interacts with E4F1. Interacts with PHC2. Interacts with zinc finger protein ZNF277. May be part of a complex including at least ZNF277, BMI1 and RNF2/RING2. In terms of processing, monoubiquitinated. May be polyubiquitinated; which does not lead to proteasomal degradation.

It is found in the nucleus. The protein localises to the cytoplasm. In terms of biological role, component of a Polycomb group (PcG) multiprotein PRC1-like complex, a complex class required to maintain the transcriptionally repressive state of many genes, including Hox genes, throughout development. PcG PRC1 complex acts via chromatin remodeling and modification of histones; it mediates monoubiquitination of histone H2A 'Lys-119', rendering chromatin heritably changed in its expressibility. The complex composed of RNF2, UB2D3 and BMI1 binds nucleosomes, and has activity only with nucleosomal histone H2A. In the PRC1-like complex, regulates the E3 ubiquitin-protein ligase activity of RNF2/RING2. The polypeptide is Polycomb complex protein BMI-1 (BMI1) (Homo sapiens (Human)).